Here is a 357-residue protein sequence, read N- to C-terminus: Isopenicillin-N N-acyltransferase (357 aa).

Positions 121 and 310 each coordinate 6-aminopenicillanate.

It belongs to the peptidase C45 family. The active form of the enzyme results from processing of the 40-kDa monomeric precursor to a heterodimer containing subunits of 11 and 29 kDa. In terms of processing, the pre-AAT protein is synthesized as 40 kDa precursor which is then self-processed into an 11 kDa (protein A) and a 29 kDa (protein B). The B protein carries AAT activity.

The protein resides in the peroxisome matrix. The enzyme catalyses isopenicillin N + phenylacetyl-CoA + H2O = penicillin G + L-2-aminoadipate + CoA + H(+). The protein operates within antibiotic biosynthesis; penicillin G biosynthesis; penicillin G from L-alpha-aminoadipate and L-cysteine and L-valine: step 3/3. In terms of biological role, isopenicillin-N N-acyltransferase; part of the gene cluster that mediates the biosynthesis of penicillin, the world's most important antibiotic. AatA catalyzes the exchange of the alpha-aminoadipyl side chain of isopenicillin N for phenylacetic acid to yield penicillin. This step occurs in the peroxisomal matrix and the penM and paaT transporters are involved in the isopenicillin N and phenylacetic acid import into the peroxisome, respectively. The penicillin biosynthesis occurs via 3 enzymatic steps, the first corresponding to the production of the tripeptide N-[(5S)-5-amino-5-carboxypentanoyl]-L-cysteinyl-D-valine (LLD-ACV or ACV) by the NRPS acvA. The tripeptide ACV is then cyclized to isopenicillin N (IPN) by the isopenicillin N synthase ipnA that forms the beta-lactam nucleus. Finally, the alpha-aminoadipyl side chain is exchanged for phenylacetic acid by the isopenicillin N acyltransferase aatA to yield penicillin in the peroxisomal matrix. The chain is Isopenicillin-N N-acyltransferase from Penicillium chrysogenum (Penicillium notatum).